The primary structure comprises 58 residues: Large ribosomal subunit protein uL30 (58 aa).

This sequence belongs to the universal ribosomal protein uL30 family. Part of the 50S ribosomal subunit.

This Azotobacter vinelandii (strain DJ / ATCC BAA-1303) protein is Large ribosomal subunit protein uL30.